Reading from the N-terminus, the 439-residue chain is GTPase Obg (439 aa).

The 160-residue stretch at 5–164 folds into the Obg domain; it reads TDFFDQATIV…LTLELELKML (160 aa). The OBG-type G domain maps to 165–335; that stretch reads ADVGLVGFPN…LLRRVADLLR (171 aa). Residues 171–178, 196–200, 217–220, 287–290, and 316–318 contribute to the GTP site; these read GFPNAGKS, FTTLT, DIPG, NKAD, and SAA. Positions 178 and 198 each coordinate Mg(2+). The OCT domain occupies 356-433; that stretch reads LPEVDENAFT…IGRAELVWDD (78 aa).

This sequence belongs to the TRAFAC class OBG-HflX-like GTPase superfamily. OBG GTPase family. Monomer. Mg(2+) is required as a cofactor.

The protein resides in the cytoplasm. Its function is as follows. An essential GTPase which binds GTP, GDP and possibly (p)ppGpp with moderate affinity, with high nucleotide exchange rates and a fairly low GTP hydrolysis rate. Plays a role in control of the cell cycle, stress response, ribosome biogenesis and in those bacteria that undergo differentiation, in morphogenesis control. In Chloroflexus aurantiacus (strain ATCC 29364 / DSM 637 / Y-400-fl), this protein is GTPase Obg.